The chain runs to 318 residues: Transaldolase (318 aa).

The active-site Schiff-base intermediate with substrate is Lys-132.

Belongs to the transaldolase family. Type 1 subfamily. Homodimer.

Its subcellular location is the cytoplasm. It catalyses the reaction D-sedoheptulose 7-phosphate + D-glyceraldehyde 3-phosphate = D-erythrose 4-phosphate + beta-D-fructose 6-phosphate. It functions in the pathway carbohydrate degradation; pentose phosphate pathway; D-glyceraldehyde 3-phosphate and beta-D-fructose 6-phosphate from D-ribose 5-phosphate and D-xylulose 5-phosphate (non-oxidative stage): step 2/3. In terms of biological role, transaldolase is important for the balance of metabolites in the pentose-phosphate pathway. This is Transaldolase from Shewanella sp. (strain MR-4).